We begin with the raw amino-acid sequence, 202 residues long: 3-isopropylmalate dehydratase small subunit 1 (202 aa).

The protein belongs to the LeuD family. LeuD type 1 subfamily. Heterodimer of LeuC and LeuD.

It carries out the reaction (2R,3S)-3-isopropylmalate = (2S)-2-isopropylmalate. It participates in amino-acid biosynthesis; L-leucine biosynthesis; L-leucine from 3-methyl-2-oxobutanoate: step 2/4. Its function is as follows. Catalyzes the isomerization between 2-isopropylmalate and 3-isopropylmalate, via the formation of 2-isopropylmaleate. This Bordetella pertussis (strain Tohama I / ATCC BAA-589 / NCTC 13251) protein is 3-isopropylmalate dehydratase small subunit 1.